A 444-amino-acid chain; its full sequence is UDP-N-acetylmuramate--L-alanine ligase (444 aa).

Glycine 110–serine 116 is a binding site for ATP.

This sequence belongs to the MurCDEF family.

Its subcellular location is the cytoplasm. It carries out the reaction UDP-N-acetyl-alpha-D-muramate + L-alanine + ATP = UDP-N-acetyl-alpha-D-muramoyl-L-alanine + ADP + phosphate + H(+). It functions in the pathway cell wall biogenesis; peptidoglycan biosynthesis. Functionally, cell wall formation. The sequence is that of UDP-N-acetylmuramate--L-alanine ligase from Streptococcus pneumoniae (strain JJA).